Reading from the N-terminus, the 176-residue chain is MGFPKEGETIQIHSYKHNGQIHRIWNETTILKATELCIIGANDRTMVTESDGRTWVTREPAICYFHAKQWFNVIGMLREDGIYYYCNISSPFALDDEAIKYIDYDLDVKVFPDMTYHILDEDEYADHKKAMNYPKEIDGILRYHLNTLLHWIHQRKGPFASEFIDIWYERYLHYTK.

Arginine 23 (proton donor) is an active-site residue. Mg(2+) is bound by residues asparagine 87, aspartate 103, aspartate 105, aspartate 107, aspartate 120, and glutamate 123.

It belongs to the Ntdp family. Requires Mg(2+) as cofactor.

The enzyme catalyses a ribonucleoside 5'-triphosphate + H2O = a ribonucleoside 5'-diphosphate + phosphate + H(+). It catalyses the reaction a ribonucleoside 5'-diphosphate + H2O = a ribonucleoside 5'-phosphate + phosphate + H(+). Its function is as follows. Has nucleoside phosphatase activity towards nucleoside triphosphates and nucleoside diphosphates. The polypeptide is Nucleoside triphosphate/diphosphate phosphatase (Bacillus licheniformis (strain ATCC 14580 / DSM 13 / JCM 2505 / CCUG 7422 / NBRC 12200 / NCIMB 9375 / NCTC 10341 / NRRL NRS-1264 / Gibson 46)).